Reading from the N-terminus, the 353-residue chain is MATCWPEPIVSVQSLSQTGVPTVPNRYVKPAHQRPVFNTTQSDAGIEIPVLDMNDVWGKPEGLRLVRSACEEWGFFQMVNHGVTHSLMERVRGAWREFFELPLEEKRKYANSPDTYEGYGSRLGVVKDAKLDWSDYFFLNYLPSSIRNPSKWPSQPPKIRELIEKYGEEVRKLCERLTETLSESLGLKPNKLMQALGGGDKVGASLRTNFYPKCPQPQLTLGLSSHSDPGGITILLPDEKVAGLQVRRGDGWVTIKSVPNALIVNIGDQLQILSNGIYKSVEHQVIVNSGMERVSLAFFYNPRSDIPVGPIEELVTANRPALYKPIRFDEYRSLIRQKGPCGKNQVDSLLLTR.

In terms of domain architecture, Fe2OG dioxygenase spans 202–302; that stretch reads VGASLRTNFY…RVSLAFFYNP (101 aa). Arginine 207 is a binding site for jasmonate. Residues asparagine 209 and tyrosine 211 each coordinate 2-oxoglutarate. Residues histidine 226, aspartate 228, and histidine 283 each contribute to the Fe cation site. Positions 293 and 295 each coordinate 2-oxoglutarate. Jasmonate contacts are provided by arginine 332 and arginine 336.

The protein belongs to the iron/ascorbate-dependent oxidoreductase family. L-ascorbate is required as a cofactor. It depends on Fe(2+) as a cofactor.

The catalysed reaction is jasmonate + 2-oxoglutarate + O2 = (1R,2R)-12-hydroxyjasmonate + succinate + CO2. Its function is as follows. 2-oxoglutarate-dependent dioxygenase involved in the oxidation of jasmonate (JA), a stress-induced phytohormone synthesized in response to attack by pathogens and herbivores, which triggers the activation of defense responses via the JA-mediated signaling pathway. Converts JA to 12-hydroxyjasmonate (12OH-JA), an inactive form of JA. Is specific to free JA, and cannot oxidize the bioactive form jasmonoyl-L-isoleucine (JA-Ile) or other JA-amino acid conjugates. Prevents over-accumulation of JA and indirectly its bioactive form JA-Ile under stress response. Acts as a negative regulator of JA-mediated defense signaling, by contributing to 12OH-JA accumulation, which represses JA defense responses upon infection by the fungal pathogen Botrytis cinerea. Acts as a negative regulator of JA-mediated defense responses upon infestation by the herbivorous caterpillar Mamestra brassicae. The polypeptide is Jasmonate-induced oxygenase 4 (Arabidopsis thaliana (Mouse-ear cress)).